The chain runs to 302 residues: Recombination-associated protein RdgC (302 aa).

This sequence belongs to the RdgC family.

It is found in the cytoplasm. The protein localises to the nucleoid. May be involved in recombination. The polypeptide is Recombination-associated protein RdgC (Proteus mirabilis (strain HI4320)).